We begin with the raw amino-acid sequence, 328 residues long: Cytochrome c biogenesis protein CcsA (328 aa).

Transmembrane regions (helical) follow at residues 13-33, 46-66, 73-93, 101-121, 146-166, 234-254, 263-283, and 295-315; these read ISFSVVSIVLTIYFLTLLVNL, GIIITFFGITGLLLTRWIYSG, LYESLIFLSWAFSIIHMVSYF, LNTITAPSVIFIQGFATSGLL, MILGYGALLCGSLLSIALLVI, IISLGFIFLTVGILSGAVWAN, WDPKETWAFITWTIFAIYLHI, and AIVALIGFILIWICYFGVNLL.

The protein belongs to the CcmF/CycK/Ccl1/NrfE/CcsA family. In terms of assembly, may interact with Ccs1.

The protein localises to the plastid. It localises to the chloroplast thylakoid membrane. Functionally, required during biogenesis of c-type cytochromes (cytochrome c6 and cytochrome f) at the step of heme attachment. In Arabidopsis thaliana (Mouse-ear cress), this protein is Cytochrome c biogenesis protein CcsA.